We begin with the raw amino-acid sequence, 2873 residues long: Fibrillin-1 (2873 aa).

The signal sequence occupies residues 1–24; that stretch reads MRRGGLLEVALAFALLLESYTSHG. A propeptide spanning residues 25–44 is cleaved from the precursor; that stretch reads ADANLEAGSLKETRANRAKR. Positions 45-81 are fibrillin unique N-terminal (FUN) domain; that stretch reads RGGGGHDALKGPNVCGSRYNAYCCPGWKTLPGGNQCI. The N-terminal domain stretch occupies residues 45 to 452; the sequence is RGGGGHDALK…PPRVLPFNVT (408 aa). Cystine bridges form between C59–C68, C67–C80, C85–C94, C89–C100, C102–C111, C119–C129, C123–C134, C136–C145, C150–C160, C154–C166, and C168–C177. EGF-like domains are found at residues 81 to 112, 115 to 146, and 147 to 178; these read IVPI…PSCG, SIQH…THCG, and QPVC…PQCE. The segment at 119–329 is interaction with MFAP4; the sequence is CSIRCMNGGS…YTSPDGTRCV (211 aa). The TB 1 domain occupies 184–236; it reads GPCFTVVSNQMCQGQLSGIVCTKTLCCATVGRAWGHPCEMCPAQPHPCRRGFI. The hybrid domain 1 stretch occupies residues 195 to 221; it reads CQGQLSGIVCTKTLCCATVGRAWGHPC. The 42-residue stretch at 246-287 folds into the EGF-like 4; calcium-binding domain; that stretch reads DVDECQAIPGMCQGGNCINTVGSFECKCPAGHKFNEVSQKCE. Disulfide bonds link C250/C262, C257/C271, C273/C286, C292/C304, C299/C313, and C315/C328. Residue S268 is glycosylated (O-linked (Glc) serine). Residues 288-329 form the EGF-like 5; calcium-binding domain; that stretch reads DIDECSTIPGVCDGGECTNTVSSYFCKCPPGFYTSPDGTRCV. Residues 334-389 form the TB 2 domain; that stretch reads GYCYTALANGRCSNQLPQSITKMQCCCDLGRCWSPGVTVAPEMCPIRSTEDFNKLC. A glycan (N-linked (GlcNAc...) asparagine) is linked at N450. Residues 451-491 form the EGF-like 6 domain; it reads VTDYCQLVRYLCQNGRCIPTPGSYRCECNKGFQLDIRGECI. 15 cysteine pairs are disulfide-bonded: C455-C467, C462-C476, C478-C490, C496-C506, C501-C515, C517-C530, C536-C548, C543-C557, C559-C572, C578-C589, C584-C598, C600-C613, C619-C630, C625-C639, and C641-C654. S473 carries an O-linked (Glc) serine glycan. Residues 492 to 531 form the EGF-like 7; calcium-binding domain; that stretch reads DVDECEKNPCTGGECINNQGSYTCHCRAGYQSTLTRTECR. S512 is a glycosylation site (O-linked (Glc) serine). Residues 532-573 form the EGF-like 8; calcium-binding domain; that stretch reads DIDECLQNGRICNNGRCINTDGSFHCVCNAGFHVTRDGKNCE. The 41-residue stretch at 574–614 folds into the EGF-like 9; calcium-binding domain; it reads DMDECSIRNMCLNGMCINEDGSFKCICKPGFQLASDGRYCK. An EGF-like 10; calcium-binding domain is found at 615 to 655; it reads DINECETPGICMNGRCVNTDGSYRCECFPGLAVGLDGRVCV. The TB 3 domain maps to 661–713; the sequence is STCYGGYRRGQCVKPLFGAVTKSECCCASTEYAFGEPCQPCPAQNSAEYQALC. Residues 725-766 enclose the EGF-like 11; calcium-binding domain; sequence DINECALDPDICPNGICENLRGTYKCICNSGYEVDITGKNCV. Cystine bridges form between C729–C741, C736–C750, C752–C765, C771–C783, C778–C792, C794–C807, C813–C823, C818–C832, C834–C847, C855–C877, C864–C889, C878–C892, C898–C910, C916–C928, C923–C937, and C939–C952. The region spanning 767 to 808 is the EGF-like 12; calcium-binding domain; it reads DINECVLNSLLCDNGQCRNTPGSFVCTCPKGFVYKPDLKTCE. In terms of domain architecture, EGF-like 13; calcium-binding spans 809–848; sequence DIDECESSPCINGVCKNSPGSFICECSPESTLDPTKTICI. In terms of domain architecture, TB 4 spans 853–904; it reads GTCWQTVIDGRCEININGATLKSECCSSLGAAWGSPCTICQLDPICGKGFSR. Residues 862–887 form a hybrid domain 2 region; sequence GRCEININGATLKSECCSSLGAAWGS. The 42-residue stretch at 912 to 953 folds into the EGF-like 14; calcium-binding domain; sequence DINECEVFPGVCKNGLCVNSRGSFKCECPNGMTLDATGRICL. The region spanning 958 to 1010 is the TB 5 domain; that stretch reads ETCFLKYDDEECTLPIAGRHRMDACCCSVGAAWGTEECEECPLRNSREYEELC. An EGF-like 15; calcium-binding domain is found at 1030 to 1071; it reads DINECKMIPSLCTHGKCRNTIGSFKCRCDSGFALDSEERNCT. 46 disulfides stabilise this stretch: C1034-C1046, C1041-C1055, C1057-C1070, C1076-C1088, C1083-C1097, C1099-C1113, C1119-C1131, C1126-C1140, C1142-C1155, C1161-C1173, C1168-C1182, C1184-C1197, C1203-C1214, C1210-C1223, C1225-C1238, C1244-C1256, C1251-C1265, C1267-C1280, C1286-C1298, C1293-C1307, C1309-C1322, C1328-C1341, C1335-C1350, C1352-C1363, C1369-C1382, C1376-C1391, C1393-C1404, C1410-C1422, C1417-C1431, C1433-C1446, C1452-C1463, C1458-C1472, C1474-C1487, C1493-C1504, C1499-C1513, C1515-C1528, C1536-C1564, C1551-C1576, C1565-C1579, C1566-C1591, C1612-C1624, C1619-C1633, C1635-C1648, C1654-C1665, C1660-C1674, and C1676-C1689. Residue N1069 is glycosylated (N-linked (GlcNAc...) asparagine). The 43-residue stretch at 1072 to 1114 folds into the EGF-like 16; calcium-binding domain; sequence DIDECRISPDLCGRGQCVNTPGDFECKCDEGYESGFMMMKNCM. The region spanning 1115–1156 is the EGF-like 17; calcium-binding domain; sequence DIDECQRDPLLCRGGICHNTEGSYRCECPPGHQLSPNISACI. O-linked (Glc) serine glycosylation occurs at S1137. An N-linked (GlcNAc...) asparagine glycan is attached at N1151. Residues 1157 to 1198 form the EGF-like 18; calcium-binding domain; the sequence is DINECELSANLCPHGRCVNLIGKYQCACNPGYHPTHDRLFCV. Positions 1199–1239 constitute an EGF-like 19; calcium-binding domain; the sequence is DIDECSIMNGGCETFCTNSDGSYECSCQPGFALMPDQRSCT. An O-linked (Glc) serine glycan is attached at S1220. Residues 1240-1281 enclose the EGF-like 20; calcium-binding domain; sequence DIDECEDNPNICDGGQCTNIPGEYRCLCYDGFMASEDMKTCV. The EGF-like 21; calcium-binding domain occupies 1282 to 1323; sequence DVNECDLNPNICLSGTCENTKGSFICHCDMGYSGKKGKTGCT. S1304 carries O-linked (Glc) serine glycosylation. An EGF-like 22; calcium-binding domain is found at 1324 to 1364; sequence DINECEIGAHNCGRHAVCTNTAGSFKCSCSPGWIGDGIKCT. Residue S1347 is glycosylated (O-linked (Glc) serine). Residues 1365 to 1405 form the EGF-like 23; calcium-binding domain; sequence DLDECSNGTHMCSQHADCKNTMGSYRCLCKDGYTGDGFTCT. N1371 is a glycosylation site (N-linked (GlcNAc...) asparagine). A glycan (O-linked (Glc) serine) is linked at S1388. The region spanning 1406–1447 is the EGF-like 24; calcium-binding domain; sequence DLDECSENLNLCGNGQCLNAPGGYRCECDMGFVPSADGKACE. The EGF-like 25; calcium-binding domain maps to 1448–1488; it reads DIDECSLPNICVFGTCHNLPGLFRCECEIGYELDRSGGNCT. N-linked (GlcNAc...) asparagine glycosylation occurs at N1486. Positions 1489–1529 constitute an EGF-like 26; calcium-binding domain; that stretch reads DVNECLDPTTCISGNCVNTPGSYTCDCPPDFELNPTRVGCV. Residue S1510 is glycosylated (O-linked (Glc) serine). The segment at 1530–2733 is C-terminal domain; the sequence is DTRSGNCYLD…GYPKRGRKRR (1204 aa). Positions 1534–1591 constitute a TB 6 domain; it reads GNCYLDIRPRGDNGDTACSNEIGVGVSKASCCCSLGKAWGTPCELCPSVNTSEYKILC. Positions 1543–1545 match the Cell attachment site motif; that stretch reads RGD. A glycan (N-linked (GlcNAc...) asparagine) is linked at N1583. The EGF-like 27; calcium-binding domain occupies 1608–1649; it reads DIDECQELPGLCQGGKCINTFGSFQCRCPTGYYLNEDTRVCD. O-linked (Glc) serine glycosylation is present at S1630. Residues 1650–1690 form the EGF-like 28; calcium-binding domain; it reads DVNECETPGICGPGTCYNTVGNYTCICPPDYMQVNGGNNCM. A glycan (N-linked (GlcNAc...) asparagine) is linked at N1671. The TB 7 domain occupies 1695 to 1750; it reads SLCYRNYYADNQTCDGELLFNMTKKMCCCSYNIGRAWNKPCEQCPIPSTDEFATLC. N-linked (GlcNAc...) asparagine glycosylation is found at N1705 and N1715. The EGF-like 29; calcium-binding domain maps to 1768–1809; that stretch reads DIDECREIPGVCENGVCINMVGSFRCECPVGFFYNDKLLVCE. Intrachain disulfides connect C1772/C1784, C1779/C1793, C1795/C1808, C1814/C1826, C1820/C1835, C1837/C1849, C1855/C1867, C1862/C1876, C1878/C1891, C1897/C1907, C1902/C1916, C1918/C1930, C1936/C1949, C1944/C1958, C1960/C1973, C1979/C1991, C1986/C2000, C2002/C2013, C2019/C2031, C2026/C2040, C2042/C2055, C2063/C2085, C2072/C2098, C2086/C2101, C2087/C2113, C2133/C2144, C2139/C2153, C2155/C2166, C2172/C2183, C2178/C2192, C2194/C2206, C2212/C2223, C2219/C2232, C2234/C2247, C2253/C2267, C2260/C2276, C2278/C2291, C2297/C2309, C2304/C2318, and C2320/C2333. Positions 1810–1850 constitute an EGF-like 30; calcium-binding domain; it reads DIDECQNGPVCQRNAECINTAGSYRCDCKPGYRLTSTGQCN. An O-linked (Glc) serine glycan is attached at S1832. The EGF-like 31; calcium-binding domain maps to 1851–1892; that stretch reads DRNECQEIPNICSHGQCIDTVGSFYCLCHTGFKTNVDQTMCL. Residue S1873 is glycosylated (O-linked (Glc) serine). The region spanning 1893 to 1931 is the EGF-like 32; calcium-binding domain; the sequence is DINECERDACGNGTCRNTIGSFNCRCNHGFILSHNNDCI. N1904 carries N-linked (GlcNAc...) asparagine glycosylation. S1913 is a glycosylation site (O-linked (Glc) serine). One can recognise an EGF-like 33; calcium-binding domain in the interval 1932–1974; sequence DVDECATGNGNLCRNGQCVNTVGSFQCRCNEGYEVAPDGRTCV. The O-linked (Glc) serine glycan is linked to S1955. The EGF-like 34; calcium-binding domain maps to 1975–2014; sequence DINECVLDPGKCAPGTCQNLDGSYRCICPPGYSLQNDKCE. Residues 2015 to 2056 form the EGF-like 35; calcium-binding domain; it reads DIDECVEEPEICALGTCSNTEGSFKCLCPEGFSLSSTGRRCQ. An O-linked (Glc) serine glycan is attached at S2037. One can recognise a TB 8 domain in the interval 2061–2113; the sequence is SYCYAKFEGGKCSSPKSRNHSKQECCCALKGEGWGDPCELCPTEPDEAFRQIC. N-linked (GlcNAc...) asparagine glycosylation is present at N2079. Residues 2129-2167 form the EGF-like 36; calcium-binding domain; the sequence is DMDECKEPDVCRHGQCINTDGSYRCECPFGYILEGNECV. S2150 is a glycosylation site (O-linked (Glc) serine). One can recognise an EGF-like 37; calcium-binding domain in the interval 2168-2207; the sequence is DTDECSVGNPCGNGTCKNVIGGFECTCEEGFEPGPMMTCE. An N-linked (GlcNAc...) asparagine glycan is attached at N2180. Residues 2208–2248 enclose the EGF-like 38; calcium-binding domain; it reads DINECAQNPLLCAFRCVNTYGSYECKCPVGYVLREDRRMCK. S2229 carries O-linked (Glc) serine glycosylation. The 44-residue stretch at 2249-2292 folds into the EGF-like 39; calcium-binding domain; the sequence is DEDECAEGKHDCTEKQMECKNLIGTYMCICGPGYQRRPDGEGCI. Positions 2293-2334 constitute an EGF-like 40; calcium-binding domain; sequence DENECQTKPGICENGRCLNTLGSYTCECNDGFTASPTQDECL. Residue S2315 is glycosylated (O-linked (Glc) serine). One can recognise a TB 9 domain in the interval 2339 to 2392; it reads GYCFSEVLQNMCQIGSSNRNPVTKSECCCDGGRGWGPHCEICPFEGTVAYKKLC. The EGF-like 41; calcium-binding domain occupies 2404–2445; it reads DIDECKVIHDVCRNGECVNDRGSYHCICKTGYTPDITGTACV. Intrachain disulfides connect C2408/C2420, C2415/C2429, C2431/C2444, C2450/C2461, C2457/C2470, C2472/C2485, C2491/C2502, C2498/C2511, C2513/C2524, C2530/C2543, C2537/C2552, C2554/C2567, C2573/C2583, C2579/C2592, C2594/C2607, C2613/C2624, C2619/C2633, C2635/C2648, C2654/C2665, C2661/C2674, and C2676/C2688. The EGF-like 42; calcium-binding domain maps to 2446–2486; that stretch reads DLNECNQAPKPCNFICKNTEGSYQCSCPKGYILQEDGRSCK. S2467 carries an O-linked (Glc) serine glycan. The EGF-like 43; calcium-binding domain maps to 2487 to 2525; that stretch reads DLDECATKQHNCQFLCVNTIGGFTCKCPPGFTQHHTACI. In terms of domain architecture, EGF-like 44; calcium-binding spans 2526 to 2568; sequence DNNECTSDINLCGSKGVCQNTPGSFTCECQRGFSLDQSGASCE. Residue S2549 is glycosylated (O-linked (Glc) serine). The EGF-like 45; calcium-binding domain maps to 2569 to 2608; that stretch reads DVDECEGNHRCQHGCQNIIGGYRCSCPQGYLQHYQWNQCV. The EGF-like 46; calcium-binding domain maps to 2609–2649; that stretch reads DENECLSAHVCGGASCHNTLGSYKCMCPTGFQYEQFSGGCQ. The O-linked (Glc) serine glycan is linked to S2630. Residues 2650-2689 form the EGF-like 47; calcium-binding domain; sequence DINECGSSQAPCSYGCSNTEGGYLCGCPPGYFRIGQGHCV. Phosphoserine occurs at positions 2704, 2705, and 2711. The segment at 2728–2747 is disordered; that stretch reads RGRKRRSTNETDASDIQDGS. N2736, N2752, and N2769 each carry an N-linked (GlcNAc...) asparagine glycan.

Belongs to the fibrillin family. In terms of assembly, interacts with COL16A1. Interacts with integrin alpha-V/beta-3. Interacts with ADAMTS10; this interaction promotes microfibril assembly. Interacts with THSD4; this interaction promotes fibril formation. Interacts (via N-terminal domain) with FBLN2 and FBLN5. Interacts with ELN. Forms a ternary complex with ELN and FBLN2 or FBLN5 and a significant interaction with ELN seen only in the presence of FBLN2 or FBLN5. Interacts (via N-terminal domain) with LTBP2 (via C-terminal domain) in a Ca(+2)-dependent manner. Interacts (via N-terminal domain) with LTBP1 (via C-terminal domain). Interacts with integrins ITGA5:ITGB1, ITGAV:ITGB3 and ITGAV:ITGB6. Interacts (via N-terminal domain) with BMP2, BMP4, BMP7, BMP10 and GDF5. Interacts (via N-terminal domain) with MFAP2 and MFAP5. Interacts with ADAMTSL5. Interacts with MFAP4. Interacts (via N-terminal domain) with TNFSF11 in a Ca(+2)-dependent manner. Interacts (via N-terminal domain) with EFEMP2; this interaction inhibits EFEMP2 binding to LOX and ELN. Post-translationally, cleavage of N- and C-terminus by furin is required for incorporation into the extracellular matrix and assembly into microfibrils. The C-terminus, which corresponds to the Asprosin chain, was initially thought to constitute a propeptide. Fibrillin-1 and Asprosin chains are still linked together during the secretion from cells, but are subsequently separated by furin, an essential step for incorporation of Fibrillin-1 into the nascent microfibrils. In terms of processing, forms intermolecular disulfide bonds either with other fibrillin-1 molecules or with other components of the microfibrils. O-glycosylated on serine residues by POGLUT2 and POGLUT3 which is necessary for efficient protein secretion. As to expression, strongly expressed during the first week of osteoblast differentiation. Secreted by white adipose tissue (at protein level).

The protein resides in the secreted. The protein localises to the extracellular space. Its subcellular location is the extracellular matrix. Its function is as follows. Structural component of the 10-12 nm diameter microfibrils of the extracellular matrix, which conveys both structural and regulatory properties to load-bearing connective tissues. Fibrillin-1-containing microfibrils provide long-term force bearing structural support. In tissues such as the lung, blood vessels and skin, microfibrils form the periphery of the elastic fiber, acting as a scaffold for the deposition of elastin. In addition, microfibrils can occur as elastin-independent networks in tissues such as the ciliary zonule, tendon, cornea and glomerulus where they provide tensile strength and have anchoring roles. Fibrillin-1 also plays a key role in tissue homeostasis through specific interactions with growth factors, such as the bone morphogenetic proteins (BMPs), growth and differentiation factors (GDFs) and latent transforming growth factor-beta-binding proteins (LTBPs), cell-surface integrins and other extracellular matrix protein and proteoglycan components. Regulates osteoblast maturation by controlling TGF-beta bioavailability and calibrating TGF-beta and BMP levels, respectively. Negatively regulates osteoclastogenesis by binding and sequestering an osteoclast differentiation and activation factor TNFSF11. This leads to disruption of TNFSF11-induced Ca(2+) signaling and impairment of TNFSF11-mediated nuclear translocation and activation of transcription factor NFATC1 which regulates genes important for osteoclast differentiation and function. Mediates cell adhesion via its binding to cell surface receptors integrins ITGAV:ITGB3 and ITGA5:ITGB1. Binds heparin and this interaction plays an important role in the assembly of microfibrils. Adipokine secreted by white adipose tissue that plays an important regulatory role in the glucose metabolism of liver, muscle and pancreas. Hormone that targets the liver in response to fasting to increase plasma glucose levels. Binds the olfactory receptor Olfr734 at the surface of hepatocytes and promotes hepatocyte glucose release by activating the protein kinase A activity in the liver, resulting in rapid glucose release into the circulation. May act as a regulator of adaptive thermogenesis by inhibiting browning and energy consumption, while increasing lipid deposition in white adipose tissue. Also acts as an orexigenic hormone that increases appetite: crosses the blood brain barrier and exerts effects on the hypothalamus. In the arcuate nucleus of the hypothalamus, asprosin directly activates orexigenic AgRP neurons and indirectly inhibits anorexigenic POMC neurons, resulting in appetite stimulation. Activates orexigenic AgRP neurons via binding to the olfactory receptor Olfr734. May also play a role in sperm motility in testis via interaction with Olfr734 receptor. The sequence is that of Fibrillin-1 from Mus musculus (Mouse).